A 721-amino-acid polypeptide reads, in one-letter code: Dolichyl-diphosphooligosaccharide--protein glycosyltransferase subunit STT3B (721 aa).

Topologically, residues 1–25 (MAAATALDSLPAPLRSLRLKTKQQE) are cytoplasmic. Residues 26 to 46 (LLLRVSALALIYVLAFVVRLF) traverse the membrane as a helical segment. At 47–129 (SVLRYESMIH…VHIREVCVLT (83 aa)) the chain is on the lumenal side. The short motif at 57 to 59 (EFD) is the DXD motif 1 element. Asp59 is a binding site for Mn(2+). The helical transmembrane segment at 130-148 (APFFAANTTLVAYAFGREI) threads the bilayer. The Cytoplasmic portion of the chain corresponds to 149-150 (WD). Residues 151–168 (SGAGLVAAALIAVCPGYI) traverse the membrane as a helical segment. At 169-179 (SRSVAGSYDNE) the chain is on the lumenal side. Positions 177 and 179 each coordinate Mn(2+). A DXD motif 2 motif is present at residues 177-179 (DNE). A helical membrane pass occupies residues 180-199 (GVAIFALLLTFYLFVRAVNT). Residues 200 to 201 (GS) lie on the Cytoplasmic side of the membrane. Residues 202-216 (LAWSLASAFGYFYMV) form a helical membrane-spanning segment. Residues 217 to 221 (SAWGG) lie on the Lumenal side of the membrane. Residues 222 to 238 (YVFIINLLPLYVLVLLV) traverse the membrane as a helical segment. The Cytoplasmic segment spans residues 239–243 (TGRYS). Residues 244-269 (QRLYVAYNSTYVLGMLLAMQIRFVGF) form a helical membrane-spanning segment. Residues 270–277 (QHVQSGEH) lie on the Lumenal side of the membrane. The helical transmembrane segment at 278-297 (MAAMGVFFLLQVFFFLDWVK) threads the bilayer. Topologically, residues 298 to 313 (YLLNDAKLFKSFLRIT) are cytoplasmic. A helical transmembrane segment spans residues 314–334 (LTCVITVGTLALGIGTASGYI). The Lumenal portion of the chain corresponds to 335–367 (SPWTGRFYSLLDPTYAKDHIPIIASVSEHQPTA). The SVSE motif motif lies at 359-362 (SVSE). Residues 368-390 (WSSFMFDFHILLFLFPAGLYFCF) traverse the membrane as a helical segment. The Cytoplasmic segment spans residues 391 to 396 (KRLSDA). A helical membrane pass occupies residues 397–413 (TIFIVMYGLTSMYFAGV). At 414-417 (MVRL) the chain is on the lumenal side. Residue Arg416 participates in dolichyl diphosphooligosaccharide binding. Residues 418–439 (ILVAAPAVCLISAIAASATIKN) form a helical membrane-spanning segment. Topologically, residues 440 to 471 (LTTLIRTKSKSPQTVSGKSSGSKAAAKGAVDQ) are cytoplasmic. The helical transmembrane segment at 472–492 (SLPFQQNVAIALLLGAFYLLS) threads the bilayer. Over 493–721 (RYAVHCTWVT…YKVKPPKNRS (229 aa)) the chain is Lumenal. The tract at residues 548–550 (WWD) is interacts with target acceptor peptide in protein substrate. The short motif at 548–552 (WWDYG) is the WWDYG motif element. Dolichyl diphosphooligosaccharide is bound at residue Tyr553. Asn560 and Asn567 each carry an N-linked (GlcNAc...) asparagine glycan. N-linked (GlcNAc...) (high mannose) asparagine glycosylation is present at Asn571. A DK motif motif is present at residues 615–622 (DINKFLWM).

This sequence belongs to the STT3 family. Component of the oligosaccharyltransferase (OST) complex. Mg(2+) serves as cofactor. It depends on Mn(2+) as a cofactor.

It localises to the endoplasmic reticulum membrane. The catalysed reaction is a di-trans,poly-cis-dolichyl diphosphooligosaccharide + L-asparaginyl-[protein] = N(4)-(oligosaccharide-(1-&gt;4)-N-acetyl-beta-D-glucosaminyl-(1-&gt;4)-N-acetyl-beta-D-glucosaminyl)-L-asparaginyl-[protein] + a di-trans,poly-cis-dolichyl diphosphate + H(+). It functions in the pathway protein modification; protein glycosylation. Catalytic subunit of the oligosaccharyl transferase (OST) complex that catalyzes the initial transfer of a defined glycan (Glc(3)Man(9)GlcNAc(2) in eukaryotes) from the lipid carrier dolichol-pyrophosphate to an asparagine residue within an Asn-X-Ser/Thr consensus motif in nascent polypeptide chains, the first step in protein N-glycosylation. N-glycosylation occurs cotranslationally and the complex associates with the Sec61 complex at the channel-forming translocon complex that mediates protein translocation across the endoplasmic reticulum (ER). All subunits are required for a maximal enzyme activity. This subunit contains the active site and the acceptor peptide and donor lipid-linked oligosaccharide (LLO) binding pockets. This chain is Dolichyl-diphosphooligosaccharide--protein glycosyltransferase subunit STT3B (STT3B), found in Oryza sativa subsp. japonica (Rice).